We begin with the raw amino-acid sequence, 477 residues long: 3-isopropylmalate dehydratase large subunit (477 aa).

The [4Fe-4S] cluster site is built by Cys-352, Cys-413, and Cys-416.

This sequence belongs to the aconitase/IPM isomerase family. LeuC type 1 subfamily. Heterodimer of LeuC and LeuD. Requires [4Fe-4S] cluster as cofactor.

The catalysed reaction is (2R,3S)-3-isopropylmalate = (2S)-2-isopropylmalate. Its pathway is amino-acid biosynthesis; L-leucine biosynthesis; L-leucine from 3-methyl-2-oxobutanoate: step 2/4. Catalyzes the isomerization between 2-isopropylmalate and 3-isopropylmalate, via the formation of 2-isopropylmaleate. In Pseudomonas putida (strain ATCC 47054 / DSM 6125 / CFBP 8728 / NCIMB 11950 / KT2440), this protein is 3-isopropylmalate dehydratase large subunit.